A 382-amino-acid chain; its full sequence is MIKKEMLAMILAGGQGTRLKILTKNNAKPAVPFGGKYRIIDFTLSNCSNSGIDTIGVLTQYEPHILNSHIGIGSPWDLDRKRGGVSILPPHMRNDGGNWYMGTADAIYQNIMFIDKYDPEYILVLSGDHIYKMDYSKMLQFHKEKNSDATIAVIDVPIEEASRFGIMNTNDDDKIYEFEEKPEQPKNNKASMGIYIFNWKILKEFLIEDSELEDSDHDFGKNIIPSLLDSGYNLYAYSFNGYWKDVGTIESLWQANMDLLDTKNPLDIYNKNWKIYSVSPSKPPQYTGPNAIIQNSLVVEGCAVFGKIQNSVLFPEVEVGSNSIIQDSVIMSNVKIGQNVIIRKCIIGSNTIIENNSVIGNSDDITVIGDGEKIKTNSIIKN.

Alpha-D-glucose 1-phosphate is bound by residues Tyr-100, Gly-165, 180 to 181, and Ser-191; that span reads EK.

It belongs to the bacterial/plant glucose-1-phosphate adenylyltransferase family. Homotetramer.

The catalysed reaction is alpha-D-glucose 1-phosphate + ATP + H(+) = ADP-alpha-D-glucose + diphosphate. Its pathway is glycan biosynthesis; glycogen biosynthesis. In terms of biological role, involved in the biosynthesis of ADP-glucose, a building block required for the elongation reactions to produce glycogen. Catalyzes the reaction between ATP and alpha-D-glucose 1-phosphate (G1P) to produce pyrophosphate and ADP-Glc. The protein is Glucose-1-phosphate adenylyltransferase of Clostridium novyi (strain NT).